Reading from the N-terminus, the 277-residue chain is Putative phosphoenolpyruvate synthase regulatory protein (277 aa).

ADP is bound at residue 157 to 164 (GVSRSGKT).

The protein belongs to the pyruvate, phosphate/water dikinase regulatory protein family. PSRP subfamily.

The catalysed reaction is [pyruvate, water dikinase] + ADP = [pyruvate, water dikinase]-phosphate + AMP + H(+). It carries out the reaction [pyruvate, water dikinase]-phosphate + phosphate + H(+) = [pyruvate, water dikinase] + diphosphate. Its function is as follows. Bifunctional serine/threonine kinase and phosphorylase involved in the regulation of the phosphoenolpyruvate synthase (PEPS) by catalyzing its phosphorylation/dephosphorylation. The chain is Putative phosphoenolpyruvate synthase regulatory protein from Vibrio atlanticus (strain LGP32) (Vibrio splendidus (strain Mel32)).